A 360-amino-acid chain; its full sequence is Mannose-1-phosphate guanylyltransferase catalytic subunit beta (360 aa).

The substrate-binding domain stretch occupies residues 2 to 222 (KALILVGGYG…QGFWMDIGQP (221 aa)). Residue D110 participates in GDP-alpha-D-mannose binding. Residue D110 coordinates Mg(2+). K162 is a catalytic residue. D218 contacts GDP-alpha-D-mannose. D218 contributes to the Mg(2+) binding site. The segment at 245–360 (CSGPGIVGNV…ESVPEPGIIM (116 aa)) is hexapeptide repeat domain.

Belongs to the transferase hexapeptide repeat family. In terms of assembly, component of the GMPPA-GMPPB mannose-1-phosphate guanylyltransferase complex composed of 4 GMPPA subunits and 8 GMPPB subunits; the complex is organized into three layers, a central layer made up of 2 GMPPA dimers sandwiched between two layers each made up of 2 GMPPB dimers. GMPPB catalytic activity is reduced when part of the complex and binding of GDP-alpha-D-Mannose by GMPPA induces allosteric feedback inhibition of GMPPB. Mg(2+) serves as cofactor. Expressed in the liver (at protein level).

The protein resides in the cytoplasm. It carries out the reaction alpha-D-mannose 1-phosphate + GTP + H(+) = GDP-alpha-D-mannose + diphosphate. Its pathway is nucleotide-sugar biosynthesis; GDP-alpha-D-mannose biosynthesis; GDP-alpha-D-mannose from alpha-D-mannose 1-phosphate (GTP route): step 1/1. Its activity is regulated as follows. Enzyme activity is reduced by incorporation into the GMPPA-GMPPB mannose-1-phosphate guanylyltransferase complex. Allosterically inhibited, when part of the GMPPA-GMPPB complex, by GDP-alpha-D-mannose binding to GMPPA. Catalytic subunit of the GMPPA-GMPPB mannose-1-phosphate guanylyltransferase complex. Catalyzes the formation of GDP-mannose, an essential precursor of glycan moieties of glycoproteins and glycolipids. Can catalyze the reverse reaction in vitro. Together with GMPPA regulates GDP-alpha-D-mannose levels. The chain is Mannose-1-phosphate guanylyltransferase catalytic subunit beta from Sus scrofa (Pig).